The sequence spans 196 residues: NADPH:quinone oxidoreductase (196 aa).

Belongs to the SsuE family. In terms of assembly, homotetramer. It depends on FMN as a cofactor.

The protein localises to the cell membrane. The enzyme catalyses a quinone + NADH + H(+) = a quinol + NAD(+). It carries out the reaction a quinone + NADPH + H(+) = a quinol + NADP(+). Functionally, the enzyme apparently serves as a quinone reductase in connection with conjugation reactions of hydroquinones involved in detoxification pathways. The sequence is that of NADPH:quinone oxidoreductase (NQR) from Arabidopsis thaliana (Mouse-ear cress).